Reading from the N-terminus, the 331-residue chain is Probable zinc-binding oxidoreductase, mitochondrial (331 aa).

The segment covering 1–29 has biased composition (polar residues); that stretch reads MASVTSVPKTGRSVNQDVPATTLTLQTRP. Residues 1–34 form a disordered region; sequence MASVTSVPKTGRSVNQDVPATTLTLQTRPTPAPN.

This sequence belongs to the zinc-containing alcohol dehydrogenase family. Quinone oxidoreductase subfamily.

The protein resides in the mitochondrion. This is Probable zinc-binding oxidoreductase, mitochondrial from Arthroderma benhamiae (strain ATCC MYA-4681 / CBS 112371) (Trichophyton mentagrophytes).